Reading from the N-terminus, the 700-residue chain is Pentatricopeptide repeat-containing protein 1, mitochondrial (700 aa).

The disordered stretch occupies residues Ser-49–Ser-93. The span at Asn-62–Thr-78 shows a compositional bias: polar residues. The span at Gln-79–Ser-88 shows a compositional bias: acidic residues. PPR repeat units follow at residues Thr-135 to Pro-171, Met-172 to Pro-206, Ser-207 to Leu-245, Asn-246 to Val-280, Thr-281 to Pro-317, and Ser-318 to Leu-354. The tract at residues Ser-393–Val-414 is disordered. 3 PPR repeats span residues Asp-519–Pro-553, Asn-554–Pro-585, and Asn-586–Val-620. Positions His-672 to Arg-700 are disordered. The span at Pro-681–Asp-692 shows a compositional bias: basic and acidic residues.

Belongs to the PTCD1 family. In terms of assembly, associates with mitochondrial leucine tRNAs. Interacts with ELAC2. In terms of tissue distribution, abundant in testes, skeletal muscle and heart.

The protein localises to the mitochondrion. The protein resides in the mitochondrion matrix. Its function is as follows. Mitochondrial protein implicated in negative regulation of leucine tRNA levels, as well as negative regulation of mitochondria-encoded proteins and COX activity. Also affects the 3'-processing of mitochondrial tRNAs. The chain is Pentatricopeptide repeat-containing protein 1, mitochondrial (PTCD1) from Homo sapiens (Human).